The primary structure comprises 875 residues: F-box only protein 41 (875 aa).

3 disordered regions span residues E85–H110, S165–A194, and S347–S542. Positions T170–G182 are enriched in pro residues. Positions P183–A194 are enriched in low complexity. A coiled-coil region spans residues A209 to G351. Positions S347–A356 are enriched in polar residues. Residues G359 to G368 show a composition bias toward gly residues. R360 is subject to Omega-N-methylarginine. A compositionally biased stretch (polar residues) spans H395 to C416. S478 is subject to Phosphoserine. The residue at position 479 (T479) is a Phosphothreonine. An F-box domain is found at S496 to S540. S762 bears the Phosphoserine mark.

In terms of assembly, directly interacts with SKP1 and CUL1.

Substrate-recognition component of the SCF (SKP1-CUL1-F-box protein)-type E3 ubiquitin ligase complex. The sequence is that of F-box only protein 41 (FBXO41) from Homo sapiens (Human).